The chain runs to 349 residues: Dihydroorotate dehydrogenase (quinone) (349 aa).

Residues 67 to 71 and T91 each bind FMN; that span reads AGLDK. K71 serves as a coordination point for substrate. 116–120 is a substrate binding site; sequence NRLGF. N147 and N180 together coordinate FMN. N180 serves as a coordination point for substrate. The Nucleophile role is filled by S183. N185 contacts substrate. K225 and T253 together coordinate FMN. 254 to 255 is a substrate binding site; the sequence is NT. FMN contacts are provided by residues G276, G305, and 326–327; that span reads YT.

It belongs to the dihydroorotate dehydrogenase family. Type 2 subfamily. Monomer. It depends on FMN as a cofactor.

The protein localises to the cell membrane. It carries out the reaction (S)-dihydroorotate + a quinone = orotate + a quinol. It participates in pyrimidine metabolism; UMP biosynthesis via de novo pathway; orotate from (S)-dihydroorotate (quinone route): step 1/1. Its function is as follows. Catalyzes the conversion of dihydroorotate to orotate with quinone as electron acceptor. The chain is Dihydroorotate dehydrogenase (quinone) from Bordetella avium (strain 197N).